A 390-amino-acid chain; its full sequence is DNA polymerase IV (390 aa).

In terms of domain architecture, UmuC spans 6–187 (VMHVDLDAFF…LDIAVMPGIG (182 aa)). Positions 10 and 105 each coordinate Mg(2+). Glu-106 is an active-site residue.

The protein belongs to the DNA polymerase type-Y family. In terms of assembly, monomer. The cofactor is Mg(2+).

It localises to the cytoplasm. It catalyses the reaction DNA(n) + a 2'-deoxyribonucleoside 5'-triphosphate = DNA(n+1) + diphosphate. Its function is as follows. Poorly processive, error-prone DNA polymerase involved in untargeted mutagenesis. Copies undamaged DNA at stalled replication forks, which arise in vivo from mismatched or misaligned primer ends. These misaligned primers can be extended by PolIV. Exhibits no 3'-5' exonuclease (proofreading) activity. May be involved in translesional synthesis, in conjunction with the beta clamp from PolIII. In Dehalococcoides mccartyi (strain ATCC BAA-2100 / JCM 16839 / KCTC 5957 / BAV1), this protein is DNA polymerase IV.